The primary structure comprises 335 residues: Cathepsin B (335 aa).

A signal peptide spans M1–S19. Positions S20–V79 are cleaved as a propeptide — activation peptide. Cystine bridges form between C93/C122, C105/C150, C141/C207, C142/C146, C179/C211, and C187/C198. C108 is a catalytic residue. N-linked (GlcNAc...) asparagine glycosylation is present at N192. At K220 the chain carries N6-acetyllysine. Residues H278 and N298 contribute to the active site. Residues H333–H335 constitute a propeptide that is removed on maturation.

It belongs to the peptidase C1 family. In terms of assembly, dimer of a heavy chain and a light chain cross-linked by a disulfide bond. Interacts with SRPX2. Directly interacts with SHKBP1.

It localises to the lysosome. It is found in the melanosome. The protein localises to the secreted. The protein resides in the extracellular space. Its subcellular location is the apical cell membrane. The catalysed reaction is Hydrolysis of proteins with broad specificity for peptide bonds. Preferentially cleaves -Arg-Arg-|-Xaa bonds in small molecule substrates (thus differing from cathepsin L). In addition to being an endopeptidase, shows peptidyl-dipeptidase activity, liberating C-terminal dipeptides.. Functionally, thiol protease which is believed to participate in intracellular degradation and turnover of proteins. Cleaves matrix extracellular phosphoglycoprotein MEPE. Involved in the solubilization of cross-linked TG/thyroglobulin in the thyroid follicle lumen. Has also been implicated in tumor invasion and metastasis. The sequence is that of Cathepsin B (CTSB) from Ovis aries (Sheep).